Consider the following 132-residue polypeptide: Small ribosomal subunit protein uS8 (132 aa).

The protein belongs to the universal ribosomal protein uS8 family. Part of the 30S ribosomal subunit. Contacts proteins S5 and S12.

Functionally, one of the primary rRNA binding proteins, it binds directly to 16S rRNA central domain where it helps coordinate assembly of the platform of the 30S subunit. This chain is Small ribosomal subunit protein uS8, found in Staphylococcus carnosus (strain TM300).